Reading from the N-terminus, the 178-residue chain is uncharacterized protein (178 aa).

The next 4 helical transmembrane spans lie at 3–23, 56–76, 101–121, and 150–170; these read IPII…FISI, IFLM…NLIF, LILP…VAGF, and LSLI…YITP.

The protein to M.jannaschii MJ0706 and Synechocystis PCC 6803 slr1478.

The protein resides in the cell membrane. This is an uncharacterized protein from Methanocaldococcus jannaschii (strain ATCC 43067 / DSM 2661 / JAL-1 / JCM 10045 / NBRC 100440) (Methanococcus jannaschii).